The following is a 416-amino-acid chain: Zinc finger protein 92 homolog (416 aa).

Residues 14–85 enclose the KRAB domain; sequence VSFEDVSVYF…DIPRTWATAG (72 aa). Positions 86 to 125 are disordered; sequence LHIGDRTQSKTSTSTQKHSGRQLPGADPQGGKEGQAARSS. C2H2-type zinc fingers lie at residues 152–174, 180–202, 208–230, 236–258, 264–286, 292–314, 320–342, and 348–370; these read YLCQQCGKAFSRSSNLIKHRIIH, YACPECGKLFRRSFALLEHQRIH, YACPECSKTFTRSSNLIKHQVIH, FACGDCGKLFRRSFALLEHARVH, YACPECGKAFSRSSNLIEHQRTH, YACGQCAKAFKGVSQLIHHQRSH, FACRECGKAFRGRSGLSQHRRVH, and YECSDCGKAFGRRANLFKHQAVH. The disordered stretch occupies residues 368 to 416; sequence AVHGARRPAKAETARRLAGPGSTGPGSAVAATSPPRPSTAARPSRPSRR. Low complexity predominate over residues 394-416; it reads SAVAATSPPRPSTAARPSRPSRR.

Belongs to the krueppel C2H2-type zinc-finger protein family.

The protein localises to the nucleus. KRAB domain-containing zinc-finger protein that represses B1/Alu SINE transposable elements and modulates the transcription of nearby genes in a tissue-specific manner. It regulates glucose homeostasis and lipid metabolism by modulating the expression of the endocrine cell-defining transcription factor, MAFB, in pancreatic islets and, the fat metabolism regulator, ACACB, in adipose tissue and muscle. The polypeptide is Zinc finger protein 92 homolog (ZFP92) (Homo sapiens (Human)).